Here is a 616-residue protein sequence, read N- to C-terminus: Chaperone protein HscA (616 aa).

Belongs to the heat shock protein 70 family.

Functionally, chaperone involved in the maturation of iron-sulfur cluster-containing proteins. Has a low intrinsic ATPase activity which is markedly stimulated by HscB. Involved in the maturation of IscU. In Salmonella arizonae (strain ATCC BAA-731 / CDC346-86 / RSK2980), this protein is Chaperone protein HscA.